A 448-amino-acid chain; its full sequence is Beclin-1 (448 aa).

An N-acetylmethionine modification is found at methionine 1. 2 positions are modified to phosphoserine: serine 14 and serine 29. Phosphoserine; by AMPK is present on residues serine 88, serine 91, and serine 94. The short motif at 106-125 (TMENLSRRLKVTGDLFDIMS) is the BH3 element. Residues 110–157 (LSRRLKVTGDLFDIMSGQTDVDHPLCEECTDTLLDQLDTQLNVTENEC) form an interaction with BCL2 and BCL2L1 region. At threonine 117 the chain carries Phosphothreonine; by DAPK1. Residues 140–267 (DTLLDQLDTQ…QLDKLKKTNV (128 aa)) adopt a coiled-coil conformation. The tract at residues 243-448 (DELKSVENQM…AWVSSQFYNK (206 aa)) is evolutionary conserved domain (ECD). Residues lysine 400 and lysine 435 each participate in a glycyl lysine isopeptide (Lys-Gly) (interchain with G-Cter in ubiquitin) cross-link. The required for membrane-association stretch occupies residues 423–448 (WTKALKFMLTNLKWGLAWVSSQFYNK).

This sequence belongs to the beclin family. A homodimeric form is proposed to exist; this metastable form readily transits to ATG14- or UVRAG-containing complexes with BECN1:UVRAG being more stable than BECN1:ATG14. Component of the PI3K (PI3KC3/PI3K-III/class III phosphatidylinositol 3-kinase) complex the core of which is composed of the catalytic subunit PIK3C3, the regulatory subunit PIK3R4 and BECN1 associating with additional regulatory/auxiliary subunits to form alternative complex forms. Alternative complex forms containing a fourth regulatory subunit in a mutually exclusive manner are PI3K complex I (PI3KC3-C1) containing ATG14, and PI3K complex II (PI3KC3-C2) containing UVRAG. PI3KC3-C1 displays a V-shaped architecture with PIK3R4 serving as a bridge between PIK3C3 and the ATG14:BECN1 subcomplex. Both, PI3KC3-C1 and PI3KC3-C2, can associate with further regulatory subunits, such as RUBCN, SH3GLB1/Bif-1 and AMBRA1. PI3KC3-C1 probably associates with PIK3CB. Forms a complex with PPP2CA and AMBRA1; AMBRA1 and BECN1 components of the complex regulate MYC stability via different pathways. Component of the complex, at least composed of LRPPRC, BECN1 and BCL2; the interactions prevent BECN1 from forming an autophagy-inducing complex with PIK3C3. Interacts with AMBRA1, GOPC, GRID2. Interacts with BCL2 and BCL2L1 isoform Bcl-X(L); the interaction inhibits BECN1 function in promoting autophagy by interfering with the formation of the PI3K complex. Interacts with cytosolic HMGB1; inhibits the interaction of BECN1 and BCL2 leading to promotion of autophagy. Interacts with USP10, USP13, VMP1, DAPK1, RAB39A. Interacts with the poly-Gln domain of ATXN3; the interaction causes deubiquitination at Lys-400 and stabilizes BECN1. Interacts with SLAMF1. Interacts with TRIM5; the interaction causes activation of BECN1 by causing its dissociation from its inhibitors BCL2 and TAB2. Interacts with active ULK1 (phosphorylated on 'Ser-317') and MEFV simultaneously. Interacts with WDR81 and WDR91; negatively regulates the PI3 kinase/PI3K activity associated with endosomal membranes. Interacts with LAPTM4B; competes with EGFR for LAPTM4B binding; regulates EGFR activity. Interacts with TRIM50. Interacts with TRIM16. Interacts with ATG14; this interaction is increased in the absence of TMEM39A. Interacts with WASHC1; preventing interaction with AMBRA1 and the DCX(AMBRA1) complex and subsequent ubiquitination. Interacts with TRIM17. Interacts with BCL2L10/BCL-B (via BH1 domain). Interacts with SH3BGRL. Interacts with IRGM; enhancing BECN1-interacting partners and influencing the composition of the BECN1 complex. Interacts with ARMC3. Interacts with LRPPRC. As to quaternary structure, (Microbial infection) Interacts with African swine fever virus (ASFV) apoptosis regulator Bcl-2 homolog; this interaction allows the virus to inhibit BECN1, and thus autophagy. Post-translationally, phosphorylation at Thr-117 by DAPK1 reduces its interaction with BCL2 and BCL2L1 and promotes induction of autophagy. In response to autophagic stimuli, phosphorylated at serine residues by AMPK in an ATG14-dependent manner, and this phosphorylation is critical for maximally efficient autophagy. In terms of processing, polyubiquitinated by NEDD4, both with 'Lys-11'- and 'Lys-63'-linkages. 'Lys-11'-linked polyubiquitination leads to degradation and is enhanced when the stabilizing interaction partner VPS34 is depleted. Deubiquitinated by USP10 and USP13, leading to stabilize the PIK3C3/VPS34-containing complexes. Polyubiquitinated at Lys-400 with 'Lys-48'-linkages. 'Lys-48'-linked polyubiquitination of Lys-400 leads to degradation. Deubiquitinated by ATXN3, leading to stabilization. Ubiquitinated at Lys-435 via 'Lys-63'-linkage by the DCX(AMBRA1) complex, thereby increasing the association between BECN1 and PIK3C3 to promote PIK3C3 activity. 'Lys-48'-linked ubiquitination by RNF216 leads to proteasomal degradation and autophagy inhibition. Proteolytically processed by caspases including CASP8 and CASP3; the C-terminal fragments lack autophagy-inducing capacity and are proposed to induce apoptosis. Thus the cleavage is proposed to be an determinant to switch from autophagy to apoptosis pathways affecting cellular homeostasis including viral infections and survival of tumor cells.

The protein resides in the cytoplasm. It localises to the golgi apparatus. Its subcellular location is the trans-Golgi network membrane. It is found in the endosome membrane. The protein localises to the endoplasmic reticulum membrane. The protein resides in the mitochondrion membrane. It localises to the cytoplasmic vesicle. Its subcellular location is the autophagosome. It is found in the mitochondrion. The protein localises to the nucleus. Plays a central role in autophagy. Acts as a core subunit of the PI3K complex that mediates formation of phosphatidylinositol 3-phosphate; different complex forms are believed to play a role in multiple membrane trafficking pathways: PI3KC3-C1 is involved in initiation of autophagosomes and PI3KC3-C2 in maturation of autophagosomes and endocytosis. Involved in regulation of degradative endocytic trafficking and required for the abscission step in cytokinesis, probably in the context of PI3KC3-C2. Essential for the formation of PI3KC3-C2 but not PI3KC3-C1 PI3K complex forms. Involved in endocytosis. May play a role in antiviral host defense. Its function is as follows. Beclin-1-C 35 kDa localized to mitochondria can promote apoptosis; it induces the mitochondrial translocation of BAX and the release of proapoptotic factors. This chain is Beclin-1 (BECN1), found in Sus scrofa (Pig).